The sequence spans 219 residues: Putative protease Do-like 6, chloroplastic (219 aa).

The transit peptide at 1 to 45 (MLFRSVHHIVARFSNSTSTPIHRFFYSPSLLRRRSSFNASLISRC) directs the protein to the chloroplast. Positions 61 to 216 (KIFSFSREPN…YSGQINKKIY (156 aa)) are serine protease. Residues histidine 99, aspartate 130, and serine 208 each act as charge relay system in the active site.

The protein belongs to the peptidase S1B family.

It localises to the plastid. The protein localises to the chloroplast. In terms of biological role, putative serine protease. This chain is Putative protease Do-like 6, chloroplastic (DEGP6), found in Arabidopsis thaliana (Mouse-ear cress).